A 136-amino-acid polypeptide reads, in one-letter code: ATP synthase epsilon chain (136 aa).

The protein belongs to the ATPase epsilon chain family. In terms of assembly, F-type ATPases have 2 components, CF(1) - the catalytic core - and CF(0) - the membrane proton channel. CF(1) has five subunits: alpha(3), beta(3), gamma(1), delta(1), epsilon(1). CF(0) has three main subunits: a, b and c.

Its subcellular location is the cellular thylakoid membrane. Functionally, produces ATP from ADP in the presence of a proton gradient across the membrane. The polypeptide is ATP synthase epsilon chain (Parasynechococcus marenigrum (strain WH8102)).